Consider the following 283-residue polypeptide: Elongation factor Ts (283 aa).

An involved in Mg(2+) ion dislocation from EF-Tu region spans residues 80–83; that stretch reads TDFV.

Belongs to the EF-Ts family.

It is found in the cytoplasm. Its function is as follows. Associates with the EF-Tu.GDP complex and induces the exchange of GDP to GTP. It remains bound to the aminoacyl-tRNA.EF-Tu.GTP complex up to the GTP hydrolysis stage on the ribosome. This is Elongation factor Ts from Erwinia tasmaniensis (strain DSM 17950 / CFBP 7177 / CIP 109463 / NCPPB 4357 / Et1/99).